A 380-amino-acid polypeptide reads, in one-letter code: DNA replication and repair protein RecF (380 aa).

30–37 (GQNGQGKT) lines the ATP pocket.

Belongs to the RecF family.

It localises to the cytoplasm. The RecF protein is involved in DNA metabolism; it is required for DNA replication and normal SOS inducibility. RecF binds preferentially to single-stranded, linear DNA. It also seems to bind ATP. This Myxococcus xanthus (strain DK1622) protein is DNA replication and repair protein RecF.